Here is a 321-residue protein sequence, read N- to C-terminus: Transcriptional activator protein Pur-alpha (321 aa).

A disordered region spans residues 1-54; sequence MADRDSGSEQGGAALGSGGSLGHPGSGSGSGGGGGGGGGGGGSGGGGGAPGGLQ. Position 2 is an N-acetylalanine (A2). Over residues 9–51 the composition is skewed to gly residues; the sequence is EQGGAALGSGGSLGHPGSGSGSGGGGGGGGGGGGSGGGGGAPG. A Phosphoserine modification is found at S181. Positions 294-313 are enriched in low complexity; sequence LHQQQQQQQEETTAATLLLQ. Residues 294-321 are disordered; the sequence is LHQQQQQQQEETTAATLLLQGEEEGEED.

The protein belongs to the PUR DNA-binding protein family. Homodimer, heterodimer with PURB and heterotrimer with PURB and YBX1/Y-box protein 1. Interacts with FMR1; this interaction occurs in association with polyribosome.

Its subcellular location is the nucleus. In terms of biological role, this is a probable transcription activator that specifically binds the purine-rich single strand of the PUR element located upstream of the c-Myc gene. May play a role in the initiation of DNA replication and in recombination. The protein is Transcriptional activator protein Pur-alpha (Pura) of Mus musculus (Mouse).